A 428-amino-acid chain; its full sequence is Enolase (428 aa).

Residue Gln163 coordinates (2R)-2-phosphoglycerate. The active-site Proton donor is the Glu205. Residues Asp242, Glu283, and Asp310 each contribute to the Mg(2+) site. (2R)-2-phosphoglycerate is bound by residues Lys335, Arg364, Ser365, and Lys386. Lys335 (proton acceptor) is an active-site residue.

The protein belongs to the enolase family. Mg(2+) is required as a cofactor.

The protein resides in the cytoplasm. The protein localises to the secreted. It localises to the cell surface. It carries out the reaction (2R)-2-phosphoglycerate = phosphoenolpyruvate + H2O. The protein operates within carbohydrate degradation; glycolysis; pyruvate from D-glyceraldehyde 3-phosphate: step 4/5. Its function is as follows. Catalyzes the reversible conversion of 2-phosphoglycerate (2-PG) into phosphoenolpyruvate (PEP). It is essential for the degradation of carbohydrates via glycolysis. This is Enolase from Saccharopolyspora erythraea (strain ATCC 11635 / DSM 40517 / JCM 4748 / NBRC 13426 / NCIMB 8594 / NRRL 2338).